The following is a 370-amino-acid chain: Tyrosine-protein kinase transforming protein SEA (370 aa).

Residues 60–323 (THRSRVIGRG…GLVCELERVL (264 aa)) form the Protein kinase domain. ATP-binding positions include 66–74 (IGRGHFGSV) and Lys-92. Asp-186 functions as the Proton acceptor in the catalytic mechanism. Tyr-216 bears the Phosphotyrosine; by autocatalysis mark. A disordered region spans residues 345 to 370 (PPFPPAPRGQLPDSEDEEDEEEEVAE). Residues 357 to 370 (DSEDEEDEEEEVAE) are compositionally biased toward acidic residues.

Belongs to the protein kinase superfamily. Tyr protein kinase family.

It carries out the reaction L-tyrosyl-[protein] + ATP = O-phospho-L-tyrosyl-[protein] + ADP + H(+). This Galliformes protein is Tyrosine-protein kinase transforming protein SEA (V-SEA).